Consider the following 334-residue polypeptide: Nucleoid-associated protein YpsIP31758_2721 (334 aa).

This sequence belongs to the YejK family.

The protein localises to the cytoplasm. It is found in the nucleoid. The chain is Nucleoid-associated protein YpsIP31758_2721 from Yersinia pseudotuberculosis serotype O:1b (strain IP 31758).